A 943-amino-acid chain; its full sequence is Translation initiation factor IF-2 (943 aa).

Low complexity predominate over residues 99-113 (VKAAQTQAAPVQPEQ). The segment at 99–354 (VKAAQTQAAP…LEPNQHAFQA (256 aa)) is disordered. Positions 117–141 (DAVKARAEAAARAEARAKAEAEAAK) are enriched in basic and acidic residues. The span at 145–172 (AKAGNKAKPAAQKPTEAKAETAPVAAET) shows a compositional bias: low complexity. Basic and acidic residues predominate over residues 173–197 (KPAEPKEKAVKPKHERNGKGKDAKK). Low complexity predominate over residues 200–215 (KPAAPAVPQPVVSAEE). The segment covering 216 to 250 (QAQRDEEARRAAALRAHQEALLKEKQERQARREAM) has biased composition (basic and acidic residues). Residues 251–264 (KQQAEQQAKAAQEA) show a composition bias toward low complexity. Composition is skewed to basic and acidic residues over residues 295–308 (AKKEDRRNRDDEGQ) and 319–335 (GGRDRNNARNGGDERVR). A tr-type G domain is found at 443–612 (PRPPVVTVMG…LLEAEVLELT (170 aa)). Residues 452-459 (GHVDHGKT) are G1. Residue 452–459 (GHVDHGKT) coordinates GTP. The tract at residues 477–481 (GITQH) is G2. The G3 stretch occupies residues 498 to 501 (DTPG). GTP is bound by residues 498–502 (DTPGH) and 552–555 (NKID). The interval 552-555 (NKID) is G4. A G5 region spans residues 588-590 (SAK).

It belongs to the TRAFAC class translation factor GTPase superfamily. Classic translation factor GTPase family. IF-2 subfamily.

It localises to the cytoplasm. Functionally, one of the essential components for the initiation of protein synthesis. Protects formylmethionyl-tRNA from spontaneous hydrolysis and promotes its binding to the 30S ribosomal subunits. Also involved in the hydrolysis of GTP during the formation of the 70S ribosomal complex. The chain is Translation initiation factor IF-2 from Neisseria gonorrhoeae (strain NCCP11945).